The primary structure comprises 655 residues: tRNA 5-methylaminomethyl-2-thiouridine biosynthesis bifunctional protein MnmC (655 aa).

The tRNA (mnm(5)s(2)U34)-methyltransferase stretch occupies residues 1 to 236 (MTDPLVPAVL…KRAMLVGRFA (236 aa)). Positions 260-655 (IGTGLAGCAA…LRALRQGTAS (396 aa)) are FAD-dependent cmnm(5)s(2)U34 oxidoreductase.

This sequence in the N-terminal section; belongs to the methyltransferase superfamily. tRNA (mnm(5)s(2)U34)-methyltransferase family. It in the C-terminal section; belongs to the DAO family. The cofactor is FAD.

It localises to the cytoplasm. The catalysed reaction is 5-aminomethyl-2-thiouridine(34) in tRNA + S-adenosyl-L-methionine = 5-methylaminomethyl-2-thiouridine(34) in tRNA + S-adenosyl-L-homocysteine + H(+). Its function is as follows. Catalyzes the last two steps in the biosynthesis of 5-methylaminomethyl-2-thiouridine (mnm(5)s(2)U) at the wobble position (U34) in tRNA. Catalyzes the FAD-dependent demodification of cmnm(5)s(2)U34 to nm(5)s(2)U34, followed by the transfer of a methyl group from S-adenosyl-L-methionine to nm(5)s(2)U34, to form mnm(5)s(2)U34. This is tRNA 5-methylaminomethyl-2-thiouridine biosynthesis bifunctional protein MnmC from Paraburkholderia phymatum (strain DSM 17167 / CIP 108236 / LMG 21445 / STM815) (Burkholderia phymatum).